A 499-amino-acid chain; its full sequence is MRGSLCLALAASILHVSLQGEFQRKLYKDLVKNYNPLERPVANDSLPLTVYFSLSLLQIMDVDEKNQVLTTNIWLQMTWTDHYLQWNASEYPGVKTVRFPDGQIWKPDILLYNSADERFDATFHTNVLVNSSGHCQYLPPGIFKSSCYIDVRWFPFDVQQCKLKFGSWSYGGWSLDLQMQEADISGYIPNGEWDLVGVLGKRSEKFYECCKEPYPDVTFTVSIRRRTLYYGLNLLIPCVLISALALLVFLLPADSGEKISLGITVLLSLTVFMLLVAEIMPATSDSVPLIAQYFASTMIIVGLSVVVTVIVLQYHHHDPDGGKMPKWTRVVLLNWCAWFLRMKRPGEDKVRPACQHNERRCSLASVEMSAVAGPPATNGNLLYIGFRGLDTMHCAPTPDSGVVCGRVACSPTHDEHLLHAGQPSEGDPDLAKILEEVRYIAHRFRCQDESEAVCSEWKFAACVVDRLCLMAFSVFTILCTIGILMSAPNFVEAVSKDFA.

The signal sequence occupies residues 1–19; that stretch reads MRGSLCLALAASILHVSLQ. Residues 20-230 are Extracellular-facing; that stretch reads GEFQRKLYKD…VSIRRRTLYY (211 aa). Residues R39 and V41 each contribute to the Ca(2+) site. N-linked (GlcNAc...) asparagine glycosylation is found at N43, N87, and N130. A disulfide bridge connects residues C147 and C161. 2 residues coordinate Ca(2+): S169 and Y207. An intrachain disulfide couples C209 to C210. 3 consecutive transmembrane segments (helical) span residues 231 to 251, 259 to 279, and 292 to 312; these read GLNL…VFLL, ISLG…VAEI, and QYFA…VIVL. The essential for TMEM35A/NACHO-mediated proper subunit assembly and trafficking to cell membrane stretch occupies residues 257–264; it reads EKISLGIT. At 313 to 466 the chain is on the cytoplasmic side; that stretch reads QYHHHDPDGG…WKFAACVVDR (154 aa). A helical transmembrane segment spans residues 467–487; that stretch reads LCLMAFSVFTILCTIGILMSA.

Belongs to the ligand-gated ion channel (TC 1.A.9) family. Acetylcholine receptor (TC 1.A.9.1) subfamily. Alpha-7/CHRNA7 sub-subfamily. Homopentamer. Homooligomer of the short form gives rise to unfunctional channels, as does coexpression of both long and short forms of the receptor. Can also form heteropentamers with CHRNB2, mainly found in basal forebrain cholinergic neurons. Interacts with RIC3; which is required for proper folding and assembly. Interacts with LYPD6. Interacts with CANX. Glycosylations at Asn-43, Asn-87 and Asn-130 are essential for TMEM35A/NACHO-mediated proper subunit assembly and trafficking to the cell membrane. As to expression, at least in chromaffin cells.

It is found in the postsynaptic cell membrane. The protein resides in the cell membrane. The enzyme catalyses Ca(2+)(in) = Ca(2+)(out). It carries out the reaction K(+)(in) = K(+)(out). The catalysed reaction is Na(+)(in) = Na(+)(out). It catalyses the reaction choline(out) = choline(in). The enzyme catalyses NH4(+)(in) = NH4(+)(out). It carries out the reaction L-arginine(in) = L-arginine(out). The catalysed reaction is guanidine(out) = guanidine(in). Activated by a myriad of ligands such as acetylcholine, cytisine, nicotine, choline and epibatidine. Oligomeric amyloid-beta protein 42 activates specifially CHRNA7:CHRNB2 nAchRs. Activity is modulated by positive allosteric modulators (PAMs), such as flavonoids, with a wide range of chemical diversity, pharmacological sensitivity and efficacy. AChR activity is inhibited by the antagonists alpha-conotoxons RgIA, ImI and ImII, small disulfide-constrained peptides from cone snails. Alpha-conotoxin PnIC selectively inhibits CHRNA7:CHRNB2 over CHRNA7 homopentamer. Functionally, component of neuronal acetylcholine receptors (nAChRs) that function as pentameric, ligand-gated cation channels with high calcium permeability among other activities. nAChRs are excitatory neurotrasnmitter receptors formed by a collection of nAChR subunits known to mediate synaptic transmission in the nervous system and the neuromuscular junction. Each nAchR subunit confers differential attributes to channel properties, including activation, deactivation and desensitization kinetics, pH sensitivity, cation permeability, and binding to allosteric modulators. CHRNA7 forms homopentameric neuronal acetylcholine receptors abundantly expressed in the central nervous system, characterized by fast desensitization and high calcium permeability. Also forms heteropentamers with CHRNB2, mainly expressed in basal forebrain cholinergic neurons. Involved in the modulation of calcium-dependent signaling pathways and influences the release of neurotransmitters, including dopamine, glutamate and GABA. Also expressed in non-neuronal cells such as immune cells like lymphocytes, monocytes and macrophages. In T cells, activation induces metabotropic signaling that results in an increase of intracellular Ca2+ concentrations, independent of ionotropic receptor functions. In macrophages, required for acetylcholine-mediated inhibition of TNF and other inflammatory cytokine release. Once activated by acetylcholine, nicotine or other agonists, selectively inhibits production of pro-inflammatory cytokines while leaving anti-inflammatory cytokines undisturbed. Stimulates the cholinergic anti-inflammatory pathway, controlling inflammation by inhibiting NFKB nuclear translocation and activating the JAK2-STAT3 pathway, independently of ion channel activity. Also expressed in the urothelium where it modulates reflex bladder activity by increasing intracellular calcium through internal stores and decreasing basal ATP release. This Bos taurus (Bovine) protein is Neuronal acetylcholine receptor subunit alpha-7 (CHRNA7).